The primary structure comprises 757 residues: Serine/threonine-protein phosphatase with EF-hands 2 (757 aa).

Positions 21–46 constitute an IQ domain; that stretch reads KAAALIQRWYRRYMARLEMRRRCTWN. The tract at residues 128-544 is catalytic; it reads ATALVEAFRL…PHIVQYQANK (417 aa). Mn(2+) contacts are provided by aspartate 179, histidine 181, aspartate 208, and asparagine 240. Catalysis depends on histidine 241, which acts as the Proton donor. A Mn(2+)-binding site is contributed by histidine 292. The segment at 318 to 349 is disordered; it reads CKTRKESENREEQKRKDNQTSSGQKPTPWFLP. Positions 321–335 are enriched in basic and acidic residues; it reads RKESENREEQKRKDN. Histidine 492 is a Mn(2+) binding site. 3 consecutive EF-hand domains span residues 572–607, 656–691, and 696–731; these read AHSSDLLVEFRKRDPDESGVITLSDWATAVESVLHL, RNRSNLETIFRIIDSDHSGFISLDEFRQTWKLFSSH, and ITDDGICDLARSIDFNKDGHIDINEFLEAFRLVEQS. Residues aspartate 585, aspartate 587, serine 589, aspartate 596, aspartate 669, aspartate 671, serine 673, glutamate 680, aspartate 709, asparagine 711, aspartate 713, histidine 715, and glutamate 720 each coordinate Ca(2+).

It belongs to the PPP phosphatase family. The cofactor is Mn(2+). In terms of tissue distribution, detected in retina, more specifically in photoreceptors.

The catalysed reaction is O-phospho-L-seryl-[protein] + H2O = L-seryl-[protein] + phosphate. It catalyses the reaction O-phospho-L-threonyl-[protein] + H2O = L-threonyl-[protein] + phosphate. Activated by calcium. Its function is as follows. May play a role in phototransduction. May dephosphorylate photoactivated rhodopsin. May function as a calcium sensing regulator of ionic currents, energy production or synaptic transmission. The sequence is that of Serine/threonine-protein phosphatase with EF-hands 2 (Ppef2) from Mus musculus (Mouse).